Here is a 410-residue protein sequence, read N- to C-terminus: 3-phosphoshikimate 1-carboxyvinyltransferase (410 aa).

3-phosphoshikimate-binding residues include lysine 21, serine 22, and arginine 26. Position 21 (lysine 21) interacts with phosphoenolpyruvate. Phosphoenolpyruvate is bound by residues glycine 69 and arginine 97. Serine 143, serine 144, glutamine 145, serine 171, aspartate 288, and lysine 315 together coordinate 3-phosphoshikimate. Glutamine 145 is a phosphoenolpyruvate binding site. The active-site Proton acceptor is the aspartate 288. The phosphoenolpyruvate site is built by arginine 319, arginine 364, and lysine 389.

Belongs to the EPSP synthase family. As to quaternary structure, monomer.

The protein resides in the cytoplasm. It carries out the reaction 3-phosphoshikimate + phosphoenolpyruvate = 5-O-(1-carboxyvinyl)-3-phosphoshikimate + phosphate. Its pathway is metabolic intermediate biosynthesis; chorismate biosynthesis; chorismate from D-erythrose 4-phosphate and phosphoenolpyruvate: step 6/7. Its function is as follows. Catalyzes the transfer of the enolpyruvyl moiety of phosphoenolpyruvate (PEP) to the 5-hydroxyl of shikimate-3-phosphate (S3P) to produce enolpyruvyl shikimate-3-phosphate and inorganic phosphate. This Bacteroides fragilis (strain YCH46) protein is 3-phosphoshikimate 1-carboxyvinyltransferase.